A 252-amino-acid chain; its full sequence is Imidazole glycerol phosphate synthase subunit HisF (252 aa).

Active-site residues include Asp-11 and Asp-130.

It belongs to the HisA/HisF family. As to quaternary structure, heterodimer of HisH and HisF.

It localises to the cytoplasm. The enzyme catalyses 5-[(5-phospho-1-deoxy-D-ribulos-1-ylimino)methylamino]-1-(5-phospho-beta-D-ribosyl)imidazole-4-carboxamide + L-glutamine = D-erythro-1-(imidazol-4-yl)glycerol 3-phosphate + 5-amino-1-(5-phospho-beta-D-ribosyl)imidazole-4-carboxamide + L-glutamate + H(+). Its pathway is amino-acid biosynthesis; L-histidine biosynthesis; L-histidine from 5-phospho-alpha-D-ribose 1-diphosphate: step 5/9. Its function is as follows. IGPS catalyzes the conversion of PRFAR and glutamine to IGP, AICAR and glutamate. The HisF subunit catalyzes the cyclization activity that produces IGP and AICAR from PRFAR using the ammonia provided by the HisH subunit. The protein is Imidazole glycerol phosphate synthase subunit HisF of Alkaliphilus metalliredigens (strain QYMF).